The primary structure comprises 289 residues: T-cell ecto-ADP-ribosyltransferase 2 (289 aa).

Residues 1 to 20 (MTSKIFKFFLTWWLTQQVTG) form the signal peptide. 2 disulfide bridges follow: C41–C246 and C141–C193. The 181-residue stretch at 61–241 (EELKLEWEKA…IFLDSPERKK (181 aa)) folds into the TR mART core domain. A glycan (N-linked (GlcNAc...) asparagine) is linked at N79. Residues Y98, R146, and Q164 each contribute to the NAD(+) site. R146 is a catalytic residue. The active site involves S167. S202 contacts NAD(+). The active site involves E209. The N-linked (GlcNAc...) asparagine glycan is linked to N249. S260 carries GPI-anchor amidated serine lipidation. Residues 261–289 (ISGSRESCVSLFLVVLLGLLVQQLTLAEL) constitute a propeptide, removed in mature form.

Belongs to the Arg-specific ADP-ribosyltransferase family. As to expression, expressed in spleen, intestine and thymus.

The protein resides in the cell membrane. It catalyses the reaction L-arginyl-[protein] + NAD(+) = N(omega)-(ADP-D-ribosyl)-L-arginyl-[protein] + nicotinamide + H(+). It carries out the reaction NAD(+) + H2O = ADP-D-ribose + nicotinamide + H(+). Its function is as follows. Has both NAD(+) glycohydrolase and ADP-ribosyltransferase activity. This Mus musculus (Mouse) protein is T-cell ecto-ADP-ribosyltransferase 2 (Art2b).